The sequence spans 706 residues: Polyribonucleotide nucleotidyltransferase (706 aa).

Mg(2+) contacts are provided by aspartate 487 and aspartate 493. The region spanning 554 to 613 (PRIHTMKISSDKIKDVIGKGGAVIRALCEETGTTIEIEDDGTIKIAATEGAAAKEAIRRI) is the KH domain. The 69-residue stretch at 623 to 691 (GRIYQGKVAR…RQGRVRLSMK (69 aa)) folds into the S1 motif domain.

Belongs to the polyribonucleotide nucleotidyltransferase family. In terms of assembly, component of the RNA degradosome, which is a multiprotein complex involved in RNA processing and mRNA degradation. The cofactor is Mg(2+).

The protein resides in the cytoplasm. The catalysed reaction is RNA(n+1) + phosphate = RNA(n) + a ribonucleoside 5'-diphosphate. Functionally, involved in mRNA degradation. Catalyzes the phosphorolysis of single-stranded polyribonucleotides processively in the 3'- to 5'-direction. The chain is Polyribonucleotide nucleotidyltransferase from Vibrio atlanticus (strain LGP32) (Vibrio splendidus (strain Mel32)).